Here is a 426-residue protein sequence, read N- to C-terminus: Protein trichome birefringence-like 19 (426 aa).

The chain crosses the membrane as a helical; Signal-anchor for type II membrane protein span at residues 15–35 (LLIAVTIATSLLTIIPLLYPL). The GDS motif motif lies at 142–144 (GDS). The short motif at 388–402 (DCVHWCLPGPIDNLN) is the DCXHWCLPGXXDXWN motif element.

This sequence belongs to the PC-esterase family. TBL subfamily.

It localises to the membrane. Its function is as follows. May act as a bridging protein that binds pectin and other cell wall polysaccharides. Probably involved in maintaining esterification of pectins. May be involved in the specific O-acetylation of cell wall polymers. The polypeptide is Protein trichome birefringence-like 19 (TBL19) (Arabidopsis thaliana (Mouse-ear cress)).